The primary structure comprises 303 residues: Caspase-7 (303 aa).

Positions 1 to 27 (MADDQNCAPELEKADPSGEDGVDAKPD) are disordered. Position 2 is an N-acetylalanine (Ala2). The propeptide at 2-23 (ADDQNCAPELEKADPSGEDGVD) is N-terminally processed. Residues 10-27 (ELEKADPSGEDGVDAKPD) are compositionally biased toward basic and acidic residues. Residue Ser30 is modified to Phosphoserine. The tract at residues 38–41 (KKKK) is exosite. The segment at 76-87 (KNFDKVTGMDVR) is loop L1. His144 is a catalytic residue. Phosphothreonine is present on Thr173. Cys186 is an active-site residue. The interval 187 to 196 (RGTELDDGVQ) is loop L2. Residues 199–206 (SGPINETD) constitute a propeptide that is removed on maturation. Positions 226–238 (VPGYYSWRNPGKG) are loop L3. Ser239 is subject to Phosphoserine. Residues 274-288 (ESQCDDPCFNEKKQI) form a loop L4 region.

Belongs to the peptidase C14A family. As to quaternary structure, heterotetramer that consists of two anti-parallel arranged heterodimers, each one formed by a 20 kDa (p20) and a 11 kDa (p11) subunit. Interacts with XIAP (via its second BIR domain); inhibiting CASP7 activity. Interacts with BIRC6/bruce. Interacts with ATXN3 (short isoform 1). Interacts with HSPA5. In terms of processing, cleavage by different proteases, such as granzyme B (GZMB), caspase-1 (CASP1), caspase-8 (CASP8) or caspase-9 (CASP9) generate the two active subunits. Its involvement in different programmed cell death processes is probably specified by the protease that activates CASP7. Cleaved and activated by initiator caspases (CASP8 and/or CASP9), leading to execution phase of apoptosis. Cleavage and maturation by GZMB regulates granzyme-mediated programmed cell death. Cleaved and activated by CASP1 in response to bacterial infection. Propeptide domains can also be cleaved efficiently by CASP3. Active heterodimers between the small subunit of caspase-7 and the large subunit of CASP3, and vice versa, also occur. Also cleaved at the N-terminus at alternative sites by CAPN1, leading to its activation. Post-translationally, phosphorylation at Ser-30 and Ser-239 by PAK2 inhibits its activity. Phosphorylation at Ser-30 prevents cleavage and activation by initiator caspase CASP9, while phosphorylation at Ser-239 prevents thiol protease activity by preventing substrate-binding. Ubiquitinated by BIRC6; this activity is inhibited by DIABLO/SMAC.

Its subcellular location is the cytoplasm. It is found in the cytosol. The protein resides in the nucleus. The protein localises to the secreted. It localises to the extracellular space. The catalysed reaction is Strict requirement for an Asp residue at position P1 and has a preferred cleavage sequence of Asp-Glu-Val-Asp-|-.. During activation, the N-terminal disordered prodomain is removed by cleavage. Concomitantly, double cleavage gives rise to a large Caspase-7 subunit p20 and a small Caspase-7 subunit p11. The two large and two small subunits then assemble to form the active CASP7 complex. Can be cleaved and activated by different caspases, depending on the context. Cleaved and activated by initiator caspases (CASP8 and/or CASP9), leading to execution phase of apoptosis. Cleavage and maturation by GZMB regulates granzyme-mediated programmed cell death. Cleavage and maturation by CASP1 regulates pyroptosis. Inhibited by XIAP, which directly binds to the active site pocket and obstructs substrate entry. Phosphorylation at Ser-30 and Ser-239 by PAK2 inhibits its activity. Inhibited by BIRC6; following inhibition of BIRC6-caspase binding by DIABLO/SMAC, BIRC6 is subjected to caspase cleavage, leading to an increase in active caspases. Functionally, thiol protease involved in different programmed cell death processes, such as apoptosis, pyroptosis or granzyme-mediated programmed cell death, by proteolytically cleaving target proteins. Has a marked preference for Asp-Glu-Val-Asp (DEVD) consensus sequences, with some plasticity for alternate non-canonical sequences. Its involvement in the different programmed cell death processes is probably determined by upstream proteases that activate CASP7. Acts as an effector caspase involved in the execution phase of apoptosis: following cleavage and activation by initiator caspases (CASP8 and/or CASP9), mediates execution of apoptosis by catalyzing cleavage of proteins, such as CLSPN, PARP1, PTGES3 and YY1. Compared to CASP3, acts as a minor executioner caspase and cleaves a limited set of target proteins. Acts as a key regulator of the inflammatory response in response to bacterial infection by catalyzing cleavage and activation of the sphingomyelin phosphodiesterase SMPD1 in the extracellular milieu, thereby promoting membrane repair. Regulates pyroptosis in intestinal epithelial cells: cleaved and activated by CASP1 in response to S.typhimurium infection, promoting its secretion to the extracellular milieu, where it catalyzes activation of SMPD1, generating ceramides that repair membranes and counteract the action of gasdermin-D (GSDMD) pores. Regulates granzyme-mediated programmed cell death in hepatocytes: cleaved and activated by granzyme B (GZMB) in response to bacterial infection, promoting its secretion to the extracellular milieu, where it catalyzes activation of SMPD1, generating ceramides that repair membranes and counteract the action of perforin (PRF1) pores. Following cleavage by CASP1 in response to inflammasome activation, catalyzes processing and inactivation of PARP1, alleviating the transcription repressor activity of PARP1. Acts as an inhibitor of type I interferon production during virus-induced apoptosis by mediating cleavage of antiviral proteins CGAS, IRF3 and MAVS, thereby preventing cytokine overproduction. Cleaves and activates sterol regulatory element binding proteins (SREBPs). Cleaves phospholipid scramblase proteins XKR4, XKR8 and XKR9. Cleaves BIRC6 following inhibition of BIRC6-caspase binding by DIABLO/SMAC. The protein is Caspase-7 (CASP7) of Mesocricetus auratus (Golden hamster).